The chain runs to 110 residues: UPF0122 protein LMOf2365_1829 (110 aa).

This sequence belongs to the UPF0122 family.

Might take part in the signal recognition particle (SRP) pathway. This is inferred from the conservation of its genetic proximity to ftsY/ffh. May be a regulatory protein. The protein is UPF0122 protein LMOf2365_1829 of Listeria monocytogenes serotype 4b (strain F2365).